The sequence spans 141 residues: uncharacterized protein (141 aa).

Its subcellular location is the mitochondrion. This is an uncharacterized protein from Arabidopsis thaliana (Mouse-ear cress).